Reading from the N-terminus, the 249-residue chain is Probable transcriptional regulator ycf27 (249 aa).

In terms of domain architecture, Response regulatory spans 13 to 126 (HLLIVDDENN…ELEARIQSIL (114 aa)). At D62 the chain carries 4-aspartylphosphate. Residues 82–100 (DIPIIMLTALEDVLDKVTG) constitute a DNA-binding region (H-T-H motif). The ompR/PhoB-type DNA-binding region spans 142–246 (INLFKTGSLN…ARGTGYLCRK (105 aa)).

The protein resides in the plastid. Its subcellular location is the chloroplast. Functionally, probable promoter-specific protein mediating the interaction between DNA and RNA polymerase. In Cyanidium caldarium (Red alga), this protein is Probable transcriptional regulator ycf27 (ycf27).